The sequence spans 278 residues: UPF0758 protein BURPS668_0979 (278 aa).

The tract at residues 1-64 (MQYEIVSAGE…ATAAARRGRD (64 aa)) is disordered. The segment covering 22–59 (AAAPAAPSSAVPSSAALSSAALSSAARPTGAPPATAAA) has biased composition (low complexity). Positions 156–278 (LVDSPGAVDD…TFSFAQAGWI (123 aa)) constitute an MPN domain. Positions 227, 229, and 240 each coordinate Zn(2+). The JAMM motif motif lies at 227-240 (HNHPSGAVRPSAAD).

It belongs to the UPF0758 family.

This is UPF0758 protein BURPS668_0979 from Burkholderia pseudomallei (strain 668).